The sequence spans 76 residues: Acyl carrier protein (76 aa).

A Carrier domain is found at 2 to 76 (SNIEERVIKV…QSAIDFVKSR (75 aa)). Position 37 is an O-(pantetheine 4'-phosphoryl)serine (Ser37).

Belongs to the acyl carrier protein (ACP) family. In terms of processing, 4'-phosphopantetheine is transferred from CoA to a specific serine of apo-ACP by AcpS. This modification is essential for activity because fatty acids are bound in thioester linkage to the sulfhydryl of the prosthetic group.

The protein resides in the cytoplasm. The protein operates within lipid metabolism; fatty acid biosynthesis. Its function is as follows. Carrier of the growing fatty acid chain in fatty acid biosynthesis. This is Acyl carrier protein from Dichelobacter nodosus (strain VCS1703A).